The primary structure comprises 95 residues: Cobalt transport protein CbiN (95 aa).

A run of 2 helical transmembrane segments spans residues 5–25 (HILM…IYSG) and 67–87 (LLFA…FGYY).

This sequence belongs to the CbiN family. Forms an energy-coupling factor (ECF) transporter complex composed of an ATP-binding protein (A component, CbiO), a transmembrane protein (T component, CbiQ) and 2 possible substrate-capture proteins (S components, CbiM and CbiN) of unknown stoichimetry.

It localises to the cell membrane. It functions in the pathway cofactor biosynthesis; adenosylcobalamin biosynthesis. Its function is as follows. Part of the energy-coupling factor (ECF) transporter complex CbiMNOQ involved in cobalt import. This is Cobalt transport protein CbiN from Methanothermobacter thermautotrophicus (strain ATCC 29096 / DSM 1053 / JCM 10044 / NBRC 100330 / Delta H) (Methanobacterium thermoautotrophicum).